A 506-amino-acid polypeptide reads, in one-letter code: Maturase K (506 aa).

Belongs to the intron maturase 2 family. MatK subfamily.

The protein localises to the plastid. It is found in the chloroplast. In terms of biological role, usually encoded in the trnK tRNA gene intron. Probably assists in splicing its own and other chloroplast group II introns. The protein is Maturase K of Trifolium striatum (Knotted clover).